Consider the following 4493-residue polypeptide: Mucin-17 (4493 aa).

The signal sequence occupies residues 1 to 25 (MPRPGTMALCLLTLVLSLLPPQAAA). Over 26–4393 (EQDLSVNRAV…QGTQKSLVYG (4368 aa)) the chain is Extracellular. Over residues 88-105 (NPEMTSIESSVTSDTPGV) the composition is skewed to polar residues. 4 disordered regions span residues 88-159 (NPEM…SISS), 188-223 (LTTSTQASSSPTTPESTTIPKSTNSEGSTPLTSMPA), 248-277 (TISAQASSSPTTAEGPSLSNSAPSGGSTPL), and 306-344 (VITSTEASSSPTTAEGTSIPTSTYTEGSTPLTSTPASTM). Low complexity predominate over residues 106 to 146 (SSTRMTPTESRTTSESTSDSTTLFPSSTEDTSSPTTPEGTD). The segment covering 148 to 159 (PMSTPSEESISS) has biased composition (polar residues). 57 consecutive repeat copies span residues 185 to 245 (STPL…EIST), 246 to 300 (PVTI…TTPA), 301 to 361 (ATNI…PVDT), 362 to 418 (STLV…TIPV), 420 to 477 (SKTF…TTPV), 479 to 538 (SKTQ…PVDT), 539 to 597 (STPV…PADS), 598 to 654 (NTFV…TTPV), 656 to 715 (SNTP…PVDT), 716 to 774 (STPV…PLDT), 775 to 831 (STHI…TTPV), 833 to 892 (SNSP…PVDT), 893 to 951 (STPV…PVDT), 952 to 1010 (STPV…PVDS), 1011 to 1069 (NTPL…PADT), 1070 to 1121 (STPV…ASTL), 1122 to 1187 (STTP…PVDS), 1188 to 1246 (KTQV…PVDT), 1247 to 1305 (STPV…PVDT), 1306 to 1364 (KGPV…PVDN), 1365 to 1423 (STPV…PVDT), 1424 to 1482 (STPG…PVDS), 1483 to 1541 (NSPV…PAVT), 1542 to 1600 (STPV…PIDS), 1601 to 1656 (KTQV…TTPV), 1658 to 1717 (SNSP…PVDN), 1718 to 1776 (STPV…PIDT), 1777 to 1835 (STPV…PVDS), 1836 to 1895 (NSPV…AVTS), 1896 to 1951 (TPVT…TTLA), 1953 to 2012 (TRTP…PVDT), 2013 to 2071 (STPA…PVDS), 2072 to 2127 (KTQV…TTPV), 2129 to 2188 (SNSP…PVDT), 2189 to 2247 (STPV…PVDT), 2248 to 2306 (STPV…PVDS), 2307 to 2365 (NTPF…PADT), 2366 to 2424 (STPV…PVDT), 2425 to 2483 (STPV…PVDT), 2484 to 2540 (STPM…TTPV), 2542 to 2601 (SNSP…PVDT), 2602 to 2653 (SIPV…ASTL), 2654 to 2719 (STTP…PVDT), 2720 to 2770 (STPV…EAST), 2772 to 2837 (STTA…PVDT), 2838 to 2896 (STPV…PVDT), 2897 to 2955 (SIPV…PVDT), 2956 to 3014 (RTPV…PADT), 3015 to 3073 (STPV…PVDS), 3074 to 3132 (NSPV…PVDT), 3133 to 3191 (STPV…PVDT), 3192 to 3247 (STPV…TTPV), 3249 to 3308 (SNTP…PADT), 3309 to 3367 (STPV…PVDT), 3368 to 3426 (STPV…PVDS), 3427 to 3485 (NTLV…PVDT), and 3486 to 3544 (STPV…PVDS). Residues 185–3727 (STPLTTSTQA…SVVTSTPVTT (3543 aa)) form a 59 X approximate tandem repeats region. The span at 188-210 (LTTSTQASSSPTTPESTTIPKST) shows a compositional bias: low complexity. The span at 211–223 (NSEGSTPLTSMPA) shows a compositional bias: polar residues. Low complexity predominate over residues 308-323 (TSTEASSSPTTAEGTS). The segment covering 324-344 (IPTSTYTEGSTPLTSTPASTM) has biased composition (polar residues). Over residues 425–441 (TTASEASSSPTTAEDTS) the composition is skewed to low complexity. Disordered stretches follow at residues 425-629 (TTAS…ERGT), 644-868 (SEAS…TPLT), 886-1104 (STTP…TPLT), 1116-1163 (SEAS…TPLA), 1175-1279 (SEAN…GSTL), and 1296-1338 (STLL…GRTP). The span at 442–483 (IATSTPSEGSTPLTSMPVSTTPVASSEASNLSTTPVDSKTQV) shows a compositional bias: polar residues. N-linked (GlcNAc...) asparagine glycosylation is present at Asn-471. The segment covering 484–497 (TTSTEASSSPPTAE) has biased composition (low complexity). Over residues 498–528 (VNSMPTSTPSEGSTPLTSMSVSTMPVASSEA) the composition is skewed to polar residues. Low complexity-rich tracts occupy residues 529–573 (STLS…TPLT) and 584–618 (SSEASTTSTTPADSNTFVTTSSEASSSSTTAEGTS). Polar residues-rich tracts occupy residues 619–629 (MPTSTYSERGT) and 644–660 (SEASTLSTTPVDSNTPV). The segment covering 661–677 (TTSTEATSSSTTAEGTS) has biased composition (low complexity). Polar residues predominate over residues 678–705 (MPTSTYTEGSTPLTSMPVNTTLVASSEA). Residue Asn-696 is glycosylated (N-linked (GlcNAc...) asparagine). Low complexity predominate over residues 706-733 (STLSTTPVDTSTPVTTSTEASSSPTTAD). Positions 737–754 (MPTSTPSEGSTPLTSMPV) are enriched in polar residues. Over residues 755–776 (SKTLLTSSEASTLSTTPLDTST) the composition is skewed to low complexity. Over residues 777–832 (HITTSTEASCSPTTTEGTSMPISTPSEGSPLLTSIPVSITPVTSPEASTLSTTPVD) the composition is skewed to polar residues. Positions 833 to 849 (SNSPVTTSTEVSSSPTP) are enriched in low complexity. The segment covering 854–868 (SMPTSTYSEGRTPLT) has biased composition (polar residues). The span at 886–900 (STTPVDTSTPVTNST) shows a compositional bias: low complexity. Asn-898 carries an N-linked (GlcNAc...) asparagine glycan. Residues 901–944 (EARSSPTTSEGTSMPTSTPGEGSTPLTSMPDSTTPVVSSEARTL) are compositionally biased toward polar residues. Residues 945-972 (SATPVDTSTPVTTSTEATSSPTTAEGTS) show a composition bias toward low complexity. Residues 973–1011 (IPTSTPSEGTTPLTSTPVSHTLVANSEASTLSTTPVDSN) show a composition bias toward polar residues. Low complexity predominate over residues 1012–1021 (TPLTTSTEAS). Residues 1029 to 1062 (GTSMPTSTPSEGSTPLTRMPVSTTMVASSETSTL) show a composition bias toward polar residues. The span at 1063 to 1090 (STTPADTSTPVTTYSQASSSSTTADGTS) shows a compositional bias: low complexity. Composition is skewed to polar residues over residues 1091–1104 (MPTSTYSEGSTPLT) and 1116–1132 (SEASTLSTTPVDTSIPV). Over residues 1133–1149 (TTSTEASSSPTTAEGTS) the composition is skewed to low complexity. Composition is skewed to polar residues over residues 1175–1198 (SEANTLSTTPVDSKTQVATSTEAS) and 1205–1222 (EVTSMPTSTPGERSTPLT). Positions 1237-1279 (STLSTSPVDTSTPVTTSAETSSSPTTAEGTSLPTSTTSEGSTL) are enriched in low complexity. 2 stretches are compositionally biased toward polar residues: residues 1310 to 1320 (VTSNEVSSSPT) and 1326 to 1338 (SMPTSTYSEGRTP). A glycan (N-linked (GlcNAc...) asparagine) is linked at Asn-1345. Polar residues predominate over residues 1360-1394 (TPVDNSTPVTTSTEACSSPTTSEGTSMPNSNPSEG). Disordered regions lie at residues 1360–1516 (TPVD…STAL), 1537–1575 (TPAVTSTPVTTYSQASSSPTTADGTSMQTSTYSEGSTPL), 1590–1930 (ANTL…PLTS), 1947–2163 (STTL…RTPL), 2177–2281 (AIST…TTPL), 2295–2501 (EVST…TTAE), 2524–2630 (TTPV…TPSE), 2647–2693 (SSEA…RSTP), 2709–2751 (ASTL…DGST), 2765–2853 (SSEA…SPTT), 2879–2925 (TPVA…TPSE), 2942–3167 (GSEA…TPLT), 3182–3577 (STLS…GSSS), 3589–3635 (TSSE…EVST), 3667–3701 (ITSTQVSSSPVTPEGTTMPIWTPSEGSTPLTTMPV), 3785–3812 (MTTASEGSSSPTTLEGTTTMPMSTTSER), 3829–3849 (PSEASTLSTPPGDTSTPLLTS), 3892–3914 (ASIASTPPLDTSTTFTPSTDTAS), 3965–3988 (VITSTELNTPSTSSSSTTTSFSTT), and 4008–4129 (STAP…TPTV). Composition is skewed to low complexity over residues 1395-1415 (TTPLTSIPVSTTPVVSSEAST) and 1423-1442 (TSTPGTTSAEATSSPTTAEG). Polar residues predominate over residues 1461 to 1483 (PVSNTPVANSEASTLSTTPVDSN). The span at 1484–1499 (SPVVTSTAVSSSPTPA) shows a compositional bias: low complexity. The segment covering 1504–1516 (IAISTPSEGSTAL) has biased composition (polar residues). A compositionally biased stretch (low complexity) spans 1537–1547 (TPAVTSTPVTT). Polar residues-rich tracts occupy residues 1548–1575 (YSQASSSPTTADGTSMQTSTYSEGSTPL) and 1590–1604 (ANTLSTTPIDSKTQV). Positions 1605 to 1620 (TASTEASSSTTAEGSS) are enriched in low complexity. Polar residues-rich tracts occupy residues 1621–1673 (MTIS…SSPT) and 1679–1775 (SMPT…TPID). Over residues 1776 to 1797 (TSTPVTTSTEATSSPTTAEGTS) the composition is skewed to low complexity. The span at 1798 to 1836 (IPTSTLSEGMTPLTSTPVSHTLVANSEASTLSTTPVDSN) shows a compositional bias: polar residues. Over residues 1837 to 1852 (SPVVTSTAVSSSPTPA) the composition is skewed to low complexity. The segment covering 1856–1883 (SIATSTPSEGSTALTSIPVSTTTVASSE) has biased composition (polar residues). The span at 1884–1900 (TNTLSTTPAVTSTPVTT) shows a compositional bias: low complexity. Composition is skewed to polar residues over residues 1901-1921 (YAQVSSSPTTADGSSMPTSTP) and 1947-1976 (STTLADTRTPVTTYSQASSSPTTADGTSMP). Positions 1984–2033 (STPLTSMPLSTTLVVSSEASTLSTTPVDTSTPATTSTEGSSSPTTAGGTS) are enriched in low complexity. Composition is skewed to polar residues over residues 2034–2043 (IQTSTPSERT) and 2051–2077 (VSTTLVVSSEGNTLSTTPVDSKTQVTN). Residue Asn-2077 is glycosylated (N-linked (GlcNAc...) asparagine). Residues 2078–2091 (STEASSSATAEGSS) show a composition bias toward low complexity. Polar residues predominate over residues 2092-2156 (MTISAPSEGS…EGTSMQTSTY (65 aa)). Over residues 2177–2196 (AISTLSTTPVDTSTPVTNST) the composition is skewed to low complexity. Asn-2194 carries an N-linked (GlcNAc...) asparagine glycan. The span at 2197-2240 (EARSSPTTSEGTSMPTSTPSEGSTPFTSMPVSTMPVVTSEASTL) shows a compositional bias: polar residues. Residues 2241 to 2268 (SATPVDTSTPVTTSTEATSSPTTAEGTS) show a composition bias toward low complexity. Polar residues-rich tracts occupy residues 2269–2281 (IPTSTLSEGTTPL) and 2295–2307 (EVSTLSTTPVDSN). The segment covering 2308-2317 (TPFTTSTEAS) has biased composition (low complexity). Residues 2325–2358 (GTSMPTSTSSEGNTPLTRMPVSTTMVASFETSTL) are compositionally biased toward polar residues. A compositionally biased stretch (low complexity) spans 2359 to 2371 (STTPADTSTPVTT). The span at 2372-2395 (YSQAGSSPTTADDTSMPTSTYSEG) shows a compositional bias: polar residues. Low complexity-rich tracts occupy residues 2396–2445 (STPL…EGTS) and 2462–2499 (PVSTTPVVSSEAGTLSTTPVDTSTPMTTSTEASSSPTT). The segment covering 2524 to 2547 (TTPVASPEASTLSTTPVDSNSPVV) has biased composition (polar residues). Over residues 2548-2563 (TSTEISSSATSAEGTS) the composition is skewed to low complexity. Polar residues predominate over residues 2564–2576 (MPTSTYSEGSTPL). Over residues 2586–2617 (LASSEASTLSTTPVDTSIPVTTSTETSSSPTT) the composition is skewed to low complexity. The segment covering 2618–2628 (AKDTSMPISTP) has biased composition (polar residues). Residues 2654–2681 (STTPVDTRTLVTTSTGTSSSPTTAEGSS) are compositionally biased toward low complexity. Polar residues predominate over residues 2682 to 2693 (MPTSTPGERSTP). Residues 2710 to 2740 (STLSTTPVDTSTPVTTSAEASSSPTTAEGTS) show a composition bias toward low complexity. Residues 2741-2751 (MRISTPSDGST) are compositionally biased toward polar residues. Low complexity-rich tracts occupy residues 2765-2816 (SSEA…TSMP) and 2829-2853 (TLSTTPVDTSTPVTTSTKASSSPTT). Over residues 2879–2900 (TPVASSEASTLSTTPVDTSIPV) the composition is skewed to polar residues. Composition is skewed to low complexity over residues 2901-2917 (TTSTEGSSSPTTAEGTS) and 2950-2976 (TTPVDTRTPVTTSAEASSSPTTAEGTS). The segment covering 2988 to 3009 (PLTSMSVSTMPVASSEASTLSR) has biased composition (polar residues). Over residues 3010-3031 (TPADTSTPVTTSTEASSSPTTA) the composition is skewed to low complexity. Residues 3037 to 3057 (PISTPSEGSTPLTSIPVSTTP) are compositionally biased toward polar residues. 2 stretches are compositionally biased toward low complexity: residues 3073-3089 (SNSPVVTSTEVSSSPTP) and 3104-3140 (STPLTGVPVSTTPVTSSAISTLSTTPVDTSTPVTTST). The span at 3141–3166 (EAHSSPTTSEGTSMPTSTPSEGSTPL) shows a compositional bias: polar residues. The segment covering 3185 to 3211 (SATPVDTSTPVTTSTEATSSTTAEGTS) has biased composition (low complexity). Residues 3212–3253 (IPTSTPSEGMTPLTSVPVSNTPVASSEASILSTTPVDSNTPL) show a composition bias toward polar residues. Residues 3254 to 3267 (TTSTEASSSPPTAE) are compositionally biased toward low complexity. A compositionally biased stretch (polar residues) spans 3268–3288 (GTSMPTSTPSEGSTPLTSMPV). Positions 3289-3314 (STTTVASSETSTLSTTPADTSTPVTT) are enriched in low complexity. Positions 3329 to 3357 (SMPTSTYSEGSTPLTNMSFSTTPVVSSEA) are enriched in polar residues. Asn-3344 carries N-linked (GlcNAc...) asparagine glycosylation. Residues 3358–3375 (STLSTTPVDTSTPVTTST) are compositionally biased toward low complexity. Over residues 3376 to 3401 (EASLSPTTAEGTSIPTSSPSEGTTPL) the composition is skewed to polar residues. The segment covering 3405–3414 (PVSTTPVVSS) has biased composition (low complexity). 2 stretches are compositionally biased toward polar residues: residues 3415-3441 (EVNTLSTTPVDSNTLVTTSTEASSSPT) and 3447-3475 (SLPTSTTSEGSTPLSIMPLSTTPVASSEA). The span at 3476–3501 (STLSTTPVDTSTPVTTSSPTNSSPTT) shows a compositional bias: low complexity. Composition is skewed to polar residues over residues 3502-3549 (AEVT…TFVT) and 3558-3571 (PATLQVTTMRMSTP). Over residues 3589 to 3616 (TSSEASTPSTPSVDRSTPVTTSTQSNST) the composition is skewed to low complexity. 2 consecutive repeat copies span residues 3604-3662 (STPV…PVDT) and 3663-3727 (STPV…PVTT). Residues 3626–3635 (PMSTPSEVST) are compositionally biased toward polar residues. A compositionally biased stretch (low complexity) spans 3667–3679 (ITSTQVSSSPVTP). 2 stretches are compositionally biased toward polar residues: residues 3690-3701 (SEGSTPLTTMPV) and 3785-3806 (MTTASEGSSSPTTLEGTTTMPM). Composition is skewed to low complexity over residues 3967-3988 (TSTELNTPSTSSSSTTTSFSTT), 4008-4083 (STAP…SSTT), and 4090-4129 (TTMTTRTKPSTRTTSFPTVTTTAVPTNTTIKSNPTSTPTV). N-linked (GlcNAc...) asparagine glycosylation occurs at Asn-4116. The region spanning 4131–4170 (RTTTCFGDGCQNTASRCKNGGTWDGLKCQCPNLYYGELCE) is the EGF-like domain. 3 disulfides stabilise this stretch: Cys-4135–Cys-4147, Cys-4140–Cys-4158, and Cys-4160–Cys-4169. In terms of domain architecture, SEA spans 4184-4291 (ISAQMELTVT…QQIMINDICS (108 aa)). Asn-4205, Asn-4236, Asn-4267, Asn-4297, and Asn-4305 each carry an N-linked (GlcNAc...) asparagine glycan. A helical transmembrane segment spans residues 4394-4414 (LVGAGVVLMLIILVALLMLVF). Topologically, residues 4415 to 4493 (RSKREVKRQK…QRPQVMTTSF (79 aa)) are cytoplasmic.

In terms of assembly, interacts via its C-terminus with PDZK1 and this interaction appears important for proper localization. In terms of processing, probably cleaved within the SEA domain. Post-translationally, N-glycosylated. Contains high mannose and complex-type glycans. The forms containing the complex type glycans localize to the cell surface. Not O-glycosylated. Expressed almost exclusively in the intestine. Expression is especially high in both the duodenum and transverse colon. Expressed in mature absorptive cells of the small intestinal villi. No expression is detected in goblet cells. Highly expressed in pancreatic adenocarcinoma tissue (at protein level). Expression is not detectable in normal pancreas, in pancreatitis or in cell lines derived from other cancers.

It localises to the cell membrane. Its subcellular location is the secreted. Its function is as follows. Probably plays a role in maintaining homeostasis on mucosal surfaces. In Homo sapiens (Human), this protein is Mucin-17 (MUC17).